The primary structure comprises 376 residues: Outer membrane porin C (376 aa).

Residues 1–21 (MKLRVLSLMVPALLVAGTAGA) form the signal peptide.

Belongs to the Gram-negative porin family. As to quaternary structure, homotrimer.

It is found in the cell outer membrane. In terms of biological role, forms pores that allow passive diffusion of small molecules across the outer membrane. The sequence is that of Outer membrane porin C (ompC) from Serratia marcescens.